The primary structure comprises 215 residues: Adenylate kinase (215 aa).

Position 10-15 (10-15) interacts with ATP; the sequence is GAGKGT. The segment at 30 to 59 is NMP; it reads STGDMFRAAMKNETEMGKLAKSFIDKGELV. AMP is bound by residues Thr-31, Arg-36, 57–59, 86–89, and Gln-93; these read ELV and GYPR. The segment at 127-165 is LID; it reads GRYICRNCGATYHKIFNPTKVEGVCDVCGSHDLYQRADD. ATP is bound at residue Arg-128. Zn(2+) contacts are provided by Cys-131 and Cys-134. Position 137-138 (137-138) interacts with ATP; the sequence is TY. The Zn(2+) site is built by Cys-151 and Cys-154. AMP contacts are provided by Arg-162 and Arg-173. ATP is bound at residue Gln-201.

It belongs to the adenylate kinase family. As to quaternary structure, monomer.

Its subcellular location is the cytoplasm. The catalysed reaction is AMP + ATP = 2 ADP. Its pathway is purine metabolism; AMP biosynthesis via salvage pathway; AMP from ADP: step 1/1. Functionally, catalyzes the reversible transfer of the terminal phosphate group between ATP and AMP. Plays an important role in cellular energy homeostasis and in adenine nucleotide metabolism. The sequence is that of Adenylate kinase from Lactococcus lactis subsp. lactis (strain IL1403) (Streptococcus lactis).